We begin with the raw amino-acid sequence, 271 residues long: Protein FANTASTIC FOUR 1 (271 aa).

One can recognise an FAF domain in the interval 114-168 (NSFPPPLNSVNGFNNSRMVKSYKEDGRLVVQAIRVCSPPRCFVSERREGRLRLCL). The disordered stretch occupies residues 174–255 (NSQDAEEEFE…KRRCNENGCE (82 aa)). Positions 177–224 (DAEEEFEEEDEDDQYDAEEEEEEEEEEEEEEEEEEEEEEEEEEEDEEG) are enriched in acidic residues. Residues 237 to 247 (GNKKVSNRPKR) are compositionally biased toward basic residues.

It belongs to the fantastic four family. In terms of tissue distribution, expressed in the shoot apex, stamens, anthers and young siliques. Detected in provascular and vascular tissue.

Functionally, able to repress WUS when constitutively overexpressed, but have no effect on CLV3. The polypeptide is Protein FANTASTIC FOUR 1 (FAF1) (Arabidopsis thaliana (Mouse-ear cress)).